A 293-amino-acid polypeptide reads, in one-letter code: 33 kDa chaperonin (293 aa).

Cystine bridges form between C230–C232 and C263–C266.

This sequence belongs to the HSP33 family. In terms of processing, under oxidizing conditions two disulfide bonds are formed involving the reactive cysteines. Under reducing conditions zinc is bound to the reactive cysteines and the protein is inactive.

Its subcellular location is the cytoplasm. Its function is as follows. Redox regulated molecular chaperone. Protects both thermally unfolding and oxidatively damaged proteins from irreversible aggregation. Plays an important role in the bacterial defense system toward oxidative stress. The protein is 33 kDa chaperonin of Edwardsiella ictaluri (strain 93-146).